Reading from the N-terminus, the 508-residue chain is MDPAAPGLACSILRLGLGLLLLCSWWYPGSAEPRAPPEKIAVIGAGIGGTSAAYYLRQKFGKDVKIDVFEKGKVGGRLATLNVQGQEFESGGSVIHPLNLHMKRFVKDLGLSAVQSPSGLVGVYNGETLVYEESSWFIINMIKLIWHYGFQSLRMHMWVEDILDKFMRIYRYQSHDYAFSSVEKLLHSLGGDDYLGLFNRSLLETLQKAGFSEKFLDEIITPVMRVNYGQTTNINGFVGAVSMAGTDPGLWAVKGGNKLVCSRLLQASRSNLVSGLVMSIEEKTRTKQTGNPSKVYEVVYQTGSETHSDFYDIVLVATPLNRKMSNINFLNFDPPIEEFHQHYEPLVTTLIKGELNSTVFSSRALNEFHLGTVLTTDNPDLFINSIGLVSPVEEDNNPQPKADTAHVWKIFSAAALTKEQILKLFVSYDYAVKQSWLAYPHYTPPEKCPSIILHDQLYYLNGIEFAASAMEMSAIAGYNAALLAYHRWNGNTHMIDQEDLYERLKTEL.

Positions 1–31 (MDPAAPGLACSILRLGLGLLLLCSWWYPGSA) are cleaved as a signal peptide. Residues Asn199, Asn291, and Asn356 are each glycosylated (N-linked (GlcNAc...) asparagine).

The protein belongs to the prenylcysteine oxidase family. The cofactor is FAD.

It localises to the lysosome. The catalysed reaction is an S-polyprenyl-L-cysteine + O2 + H2O = a polyprenal + L-cysteine + H2O2. It carries out the reaction S-(2E,6E)-farnesyl-L-cysteine + O2 + H2O = (2E,6E)-farnesal + L-cysteine + H2O2. It catalyses the reaction [(2E,6E,10E)-geranylgeranyl]-L-cysteine + O2 + H2O = (2E,6E,10E)-geranylgeranial + L-cysteine + H2O2. Functionally, prenylcysteine oxidase that cleaves the thioether bond of prenyl-L-cysteines, such as farnesylcysteine and geranylgeranylcysteine. Only active against free prenylcysteines and not prenylcysteine residues within prenylated proteins or peptides. Involved in the final step in the degradation of prenylated proteins, by degrading prenylcysteines after the protein has been degraded. The polypeptide is Prenylcysteine oxidase 1 (Bos taurus (Bovine)).